A 480-amino-acid chain; its full sequence is Ribulose bisphosphate carboxylase large chain (480 aa).

Residues 1–2 (MS) constitute a propeptide that is removed on maturation. Pro-3 carries the post-translational modification N-acetylproline. N6,N6,N6-trimethyllysine is present on Lys-14. Substrate-binding residues include Asn-123 and Thr-173. The Proton acceptor role is filled by Lys-175. Lys-177 serves as a coordination point for substrate. The Mg(2+) site is built by Lys-201, Asp-203, and Glu-204. Lys-201 is modified (N6-carboxylysine). The active-site Proton acceptor is His-294. Residues Arg-295, His-327, and Ser-379 each contribute to the substrate site.

This sequence belongs to the RuBisCO large chain family. Type I subfamily. As to quaternary structure, heterohexadecamer of 8 large chains and 8 small chains; disulfide-linked. The disulfide link is formed within the large subunit homodimers. Mg(2+) is required as a cofactor. The disulfide bond which can form in the large chain dimeric partners within the hexadecamer appears to be associated with oxidative stress and protein turnover.

Its subcellular location is the plastid. It is found in the chloroplast. The catalysed reaction is 2 (2R)-3-phosphoglycerate + 2 H(+) = D-ribulose 1,5-bisphosphate + CO2 + H2O. It carries out the reaction D-ribulose 1,5-bisphosphate + O2 = 2-phosphoglycolate + (2R)-3-phosphoglycerate + 2 H(+). RuBisCO catalyzes two reactions: the carboxylation of D-ribulose 1,5-bisphosphate, the primary event in carbon dioxide fixation, as well as the oxidative fragmentation of the pentose substrate in the photorespiration process. Both reactions occur simultaneously and in competition at the same active site. This Phalaenopsis aphrodite subsp. formosana (Moth orchid) protein is Ribulose bisphosphate carboxylase large chain.